The following is a 66-amino-acid chain: DNA-directed RNA polymerase subunit omega (66 aa).

Belongs to the RNA polymerase subunit omega family. In terms of assembly, the RNAP catalytic core consists of 2 alpha, 1 beta, 1 beta' and 1 omega subunit. When a sigma factor is associated with the core the holoenzyme is formed, which can initiate transcription.

The catalysed reaction is RNA(n) + a ribonucleoside 5'-triphosphate = RNA(n+1) + diphosphate. Promotes RNA polymerase assembly. Latches the N- and C-terminal regions of the beta' subunit thereby facilitating its interaction with the beta and alpha subunits. This chain is DNA-directed RNA polymerase subunit omega, found in Clostridium botulinum (strain Alaska E43 / Type E3).